The following is an 813-amino-acid chain: Glycerol-3-phosphate acyltransferase (813 aa).

Residues 304–309 (CHRSHI) carry the HXXXXD motif motif.

Belongs to the GPAT/DAPAT family.

The protein resides in the cell inner membrane. The enzyme catalyses sn-glycerol 3-phosphate + an acyl-CoA = a 1-acyl-sn-glycero-3-phosphate + CoA. Its pathway is phospholipid metabolism; CDP-diacylglycerol biosynthesis; CDP-diacylglycerol from sn-glycerol 3-phosphate: step 1/3. In Actinobacillus succinogenes (strain ATCC 55618 / DSM 22257 / CCUG 43843 / 130Z), this protein is Glycerol-3-phosphate acyltransferase.